The chain runs to 227 residues: Cytochrome c oxidase subunit 2 (227 aa).

The Mitochondrial intermembrane segment spans residues 1–14 (MAYPMQLGLQDATS). Residues 15-45 (PIMEELTDFHDHTLMIVFLISTLVLYIISLM) form a helical membrane-spanning segment. The Mitochondrial matrix segment spans residues 46 to 59 (LTTKLTHTNTMDAQ). Residues 60-87 (EVETVWTILPAIILIMIALPSLRILYMM) form a helical membrane-spanning segment. The Mitochondrial intermembrane segment spans residues 88–227 (DEINDPYLTV…QFESWTSSMT (140 aa)). Residues histidine 161, cysteine 196, glutamate 198, cysteine 200, histidine 204, and methionine 207 each contribute to the Cu cation site. Residue glutamate 198 participates in Mg(2+) binding.

This sequence belongs to the cytochrome c oxidase subunit 2 family. As to quaternary structure, component of the cytochrome c oxidase (complex IV, CIV), a multisubunit enzyme composed of 14 subunits. The complex is composed of a catalytic core of 3 subunits MT-CO1, MT-CO2 and MT-CO3, encoded in the mitochondrial DNA, and 11 supernumerary subunits COX4I, COX5A, COX5B, COX6A, COX6B, COX6C, COX7A, COX7B, COX7C, COX8 and NDUFA4, which are encoded in the nuclear genome. The complex exists as a monomer or a dimer and forms supercomplexes (SCs) in the inner mitochondrial membrane with NADH-ubiquinone oxidoreductase (complex I, CI) and ubiquinol-cytochrome c oxidoreductase (cytochrome b-c1 complex, complex III, CIII), resulting in different assemblies (supercomplex SCI(1)III(2)IV(1) and megacomplex MCI(2)III(2)IV(2)). Found in a complex with TMEM177, COA6, COX18, COX20, SCO1 and SCO2. Interacts with TMEM177 in a COX20-dependent manner. Interacts with COX20. Interacts with COX16. Cu cation serves as cofactor.

The protein localises to the mitochondrion inner membrane. It carries out the reaction 4 Fe(II)-[cytochrome c] + O2 + 8 H(+)(in) = 4 Fe(III)-[cytochrome c] + 2 H2O + 4 H(+)(out). Its function is as follows. Component of the cytochrome c oxidase, the last enzyme in the mitochondrial electron transport chain which drives oxidative phosphorylation. The respiratory chain contains 3 multisubunit complexes succinate dehydrogenase (complex II, CII), ubiquinol-cytochrome c oxidoreductase (cytochrome b-c1 complex, complex III, CIII) and cytochrome c oxidase (complex IV, CIV), that cooperate to transfer electrons derived from NADH and succinate to molecular oxygen, creating an electrochemical gradient over the inner membrane that drives transmembrane transport and the ATP synthase. Cytochrome c oxidase is the component of the respiratory chain that catalyzes the reduction of oxygen to water. Electrons originating from reduced cytochrome c in the intermembrane space (IMS) are transferred via the dinuclear copper A center (CU(A)) of subunit 2 and heme A of subunit 1 to the active site in subunit 1, a binuclear center (BNC) formed by heme A3 and copper B (CU(B)). The BNC reduces molecular oxygen to 2 water molecules using 4 electrons from cytochrome c in the IMS and 4 protons from the mitochondrial matrix. This chain is Cytochrome c oxidase subunit 2 (MT-CO2), found in Cratogeomys castanops (Yellow-faced pocket gopher).